The chain runs to 210 residues: Large ribosomal subunit protein uL3 (210 aa).

Positions 126–167 are disordered; sequence WGFQRGPSGHGSKNIREPGSTGNATFPGRVIKGKKMPGQKGN. A compositionally biased stretch (basic residues) spans 156–167; sequence IKGKKMPGQKGN.

Belongs to the universal ribosomal protein uL3 family. In terms of assembly, part of the 50S ribosomal subunit. Forms a cluster with proteins L14 and L19.

One of the primary rRNA binding proteins, it binds directly near the 3'-end of the 23S rRNA, where it nucleates assembly of the 50S subunit. The protein is Large ribosomal subunit protein uL3 of Syntrophobacter fumaroxidans (strain DSM 10017 / MPOB).